A 557-amino-acid chain; its full sequence is Formate--tetrahydrofolate ligase 2 (557 aa).

66–73 is a binding site for ATP; that stretch reads TPAGEGKT.

The protein belongs to the formate--tetrahydrofolate ligase family.

It catalyses the reaction (6S)-5,6,7,8-tetrahydrofolate + formate + ATP = (6R)-10-formyltetrahydrofolate + ADP + phosphate. Its pathway is one-carbon metabolism; tetrahydrofolate interconversion. The protein is Formate--tetrahydrofolate ligase 2 of Streptococcus pyogenes serotype M3 (strain ATCC BAA-595 / MGAS315).